A 129-amino-acid polypeptide reads, in one-letter code: Prefoldin subunit 6 (129 aa).

2 coiled-coil regions span residues 6 to 26 (VRDL…IQKD) and 84 to 118 (IEYI…LQQR).

It belongs to the prefoldin subunit beta family. Heterohexamer of two PFD-alpha type and four PFD-beta type subunits forming prefoldin co-chaperone complex. Interacts with PFD2, PFD3, PFD4 and PFD5. Interacts with LSM8, a specific subunit of the LSM2-8 complex, which is a core component of the spliceosome. Binds to HSP90 to facilitate the formation of a larger complex made at least of HSP90, PFD6 and LSM8.

The protein resides in the cytoplasm. It is found in the nucleus. Functionally, binds specifically to cytosolic chaperonin (c-CPN) and transfers target proteins to it. Binds to nascent polypeptide chain and promotes folding in an environment in which there are many competing pathways for nonnative proteins. Together with other chaperonins, contribute to the regulation of gene expression by modulating the spliceosome function on pre-mRNA splicing post-transcriptionally by acting as a co-chaperone of Hsp90 to control levels of LSM8. Required for the biogenesis of tubulins and for subsequent microtubules (MTs) organization and dynamicity, but unable to associate with microtubules. Involved in the process leading to microtubules dissociation in response to gibberellic acid (GA) probably due to the DELLA proteins-mediated translocation of the prefoldin co-chaperone complex from the cytoplasm to the nucleus. Contributes to the GA-dependent regulation of PIN2 trafficking at the plasma membrane, thus influencing auxin flux. The polypeptide is Prefoldin subunit 6 (Arabidopsis thaliana (Mouse-ear cress)).